Here is a 130-residue protein sequence, read N- to C-terminus: Small ribosomal subunit protein uS8 (130 aa).

Belongs to the universal ribosomal protein uS8 family. As to quaternary structure, part of the 30S ribosomal subunit. Contacts proteins S5 and S12.

One of the primary rRNA binding proteins, it binds directly to 16S rRNA central domain where it helps coordinate assembly of the platform of the 30S subunit. The chain is Small ribosomal subunit protein uS8 from Cronobacter sakazakii (strain ATCC BAA-894) (Enterobacter sakazakii).